Here is a 348-residue protein sequence, read N- to C-terminus: Phospho-2-dehydro-3-deoxyheptonate aldolase, Trp-sensitive (348 aa).

Belongs to the class-I DAHP synthase family.

It catalyses the reaction D-erythrose 4-phosphate + phosphoenolpyruvate + H2O = 7-phospho-2-dehydro-3-deoxy-D-arabino-heptonate + phosphate. It participates in metabolic intermediate biosynthesis; chorismate biosynthesis; chorismate from D-erythrose 4-phosphate and phosphoenolpyruvate: step 1/7. Its function is as follows. Stereospecific condensation of phosphoenolpyruvate (PEP) and D-erythrose-4-phosphate (E4P) giving rise to 3-deoxy-D-arabino-heptulosonate-7-phosphate (DAHP). This is Phospho-2-dehydro-3-deoxyheptonate aldolase, Trp-sensitive (aroH) from Salmonella typhimurium (strain LT2 / SGSC1412 / ATCC 700720).